Consider the following 467-residue polypeptide: Phosphomethylpyrimidine synthase (467 aa).

Residues Asn-80, Met-109, Tyr-139, His-175, 195–197, 236–239, and Glu-275 contribute to the substrate site; these read SRG and DSLR. Residue His-279 coordinates Zn(2+). Substrate is bound at residue Tyr-302. His-343 lines the Zn(2+) pocket. The [4Fe-4S] cluster site is built by Cys-423, Cys-426, and Cys-431.

Belongs to the ThiC family. [4Fe-4S] cluster serves as cofactor.

It catalyses the reaction 5-amino-1-(5-phospho-beta-D-ribosyl)imidazole + S-adenosyl-L-methionine = 4-amino-2-methyl-5-(phosphooxymethyl)pyrimidine + CO + 5'-deoxyadenosine + formate + L-methionine + 3 H(+). Its pathway is cofactor biosynthesis; thiamine diphosphate biosynthesis. In terms of biological role, catalyzes the synthesis of the hydroxymethylpyrimidine phosphate (HMP-P) moiety of thiamine from aminoimidazole ribotide (AIR) in a radical S-adenosyl-L-methionine (SAM)-dependent reaction. The chain is Phosphomethylpyrimidine synthase from Synechococcus sp. (strain WH7803).